The sequence spans 232 residues: Large ribosomal subunit protein uL1 (232 aa).

It belongs to the universal ribosomal protein uL1 family. Part of the 50S ribosomal subunit.

Functionally, binds directly to 23S rRNA. The L1 stalk is quite mobile in the ribosome, and is involved in E site tRNA release. Its function is as follows. Protein L1 is also a translational repressor protein, it controls the translation of the L11 operon by binding to its mRNA. The sequence is that of Large ribosomal subunit protein uL1 from Azorhizobium caulinodans (strain ATCC 43989 / DSM 5975 / JCM 20966 / LMG 6465 / NBRC 14845 / NCIMB 13405 / ORS 571).